An 878-amino-acid chain; its full sequence is Alanine--tRNA ligase (878 aa).

Zn(2+)-binding residues include H566, H570, C668, and H672. A disordered region spans residues 846–866; that stretch reads GGGRPDMAQAGGKQPEKLEEA.

The protein belongs to the class-II aminoacyl-tRNA synthetase family. It depends on Zn(2+) as a cofactor.

The protein localises to the cytoplasm. The catalysed reaction is tRNA(Ala) + L-alanine + ATP = L-alanyl-tRNA(Ala) + AMP + diphosphate. Catalyzes the attachment of alanine to tRNA(Ala) in a two-step reaction: alanine is first activated by ATP to form Ala-AMP and then transferred to the acceptor end of tRNA(Ala). Also edits incorrectly charged Ser-tRNA(Ala) and Gly-tRNA(Ala) via its editing domain. The polypeptide is Alanine--tRNA ligase (Bacillus pumilus (strain SAFR-032)).